The chain runs to 139 residues: ATP synthase epsilon chain (139 aa).

It belongs to the ATPase epsilon chain family. In terms of assembly, F-type ATPases have 2 components, CF(1) - the catalytic core - and CF(0) - the membrane proton channel. CF(1) has five subunits: alpha(3), beta(3), gamma(1), delta(1), epsilon(1). CF(0) has three main subunits: a, b and c.

The protein localises to the cell inner membrane. Produces ATP from ADP in the presence of a proton gradient across the membrane. The sequence is that of ATP synthase epsilon chain from Actinobacillus pleuropneumoniae serotype 5b (strain L20).